Here is a 95-residue protein sequence, read N- to C-terminus: Aspartyl/glutamyl-tRNA(Asn/Gln) amidotransferase subunit C (95 aa).

It belongs to the GatC family. In terms of assembly, heterotrimer of A, B and C subunits.

It carries out the reaction L-glutamyl-tRNA(Gln) + L-glutamine + ATP + H2O = L-glutaminyl-tRNA(Gln) + L-glutamate + ADP + phosphate + H(+). It catalyses the reaction L-aspartyl-tRNA(Asn) + L-glutamine + ATP + H2O = L-asparaginyl-tRNA(Asn) + L-glutamate + ADP + phosphate + 2 H(+). Its function is as follows. Allows the formation of correctly charged Asn-tRNA(Asn) or Gln-tRNA(Gln) through the transamidation of misacylated Asp-tRNA(Asn) or Glu-tRNA(Gln) in organisms which lack either or both of asparaginyl-tRNA or glutaminyl-tRNA synthetases. The reaction takes place in the presence of glutamine and ATP through an activated phospho-Asp-tRNA(Asn) or phospho-Glu-tRNA(Gln). The polypeptide is Aspartyl/glutamyl-tRNA(Asn/Gln) amidotransferase subunit C (Dehalococcoides mccartyi (strain ATCC BAA-2266 / KCTC 15142 / 195) (Dehalococcoides ethenogenes (strain 195))).